A 146-amino-acid polypeptide reads, in one-letter code: Hemoglobin subunit beta (146 aa).

The Globin domain maps to 2–146; the sequence is HWSAEEKQLI…VAHSLARVYH (145 aa). 2 residues coordinate heme b: histidine 63 and histidine 92.

This sequence belongs to the globin family. In terms of assembly, heterotetramer of two alpha chains and two beta chains. In terms of tissue distribution, red blood cells.

In terms of biological role, involved in oxygen transport from the lung to the various peripheral tissues. This Microcephalophis gracilis (Graceful small-headed sea snake) protein is Hemoglobin subunit beta (HBB).